Here is a 752-residue protein sequence, read N- to C-terminus: Neuroendocrine convertase 1 (752 aa).

Positions 1–27 are cleaved as a signal peptide; the sequence is MKQRGWTLQCTAFTLFCVWCALNSVKA. The propeptide occupies 28–110; it reads KRQFVNEWAA…QQYEKERRKR (83 aa). The Peptidase S8 domain maps to 129-450; it reads QWYLQDTRMT…FGLLNAKALV (322 aa). The active-site Charge relay system is Asp-167. Asn-173 carries an N-linked (GlcNAc...) asparagine glycan. His-208 functions as the Charge relay system in the catalytic mechanism. 2 disulfide bridges follow: Cys-225–Cys-374 and Cys-317–Cys-347. Ser-382 acts as the Charge relay system in catalysis. An N-linked (GlcNAc...) asparagine glycan is attached at Asn-401. The 138-residue stretch at 460-597 folds into the P/Homo B domain; the sequence is NVPEKKECII…KLILHGTSSQ (138 aa). Cys-467 and Cys-494 are disulfide-bonded. The interval 631 to 662 is disordered; it reads PTQNSLNGNLLVPKNSSSSSVEDRRDEQVQGA. Asn-645 is a glycosylation site (N-linked (GlcNAc...) asparagine).

The protein belongs to the peptidase S8 family. Furin subfamily. The cofactor is Ca(2+).

It is found in the cytoplasmic vesicle. The protein resides in the secretory vesicle. It carries out the reaction Release of protein hormones, neuropeptides and renin from their precursors, generally by hydrolysis of -Lys-Arg-|- bonds.. Involved in the processing of hormone and other protein precursors at sites comprised of pairs of basic amino acid residues. Substrates include POMC, renin, enkephalin, dynorphin, somatostatin, insulin and AGRP. This chain is Neuroendocrine convertase 1 (Pcsk1), found in Rattus norvegicus (Rat).